The chain runs to 321 residues: Cytochrome c biogenesis protein CcsA (321 aa).

Helical transmembrane passes span 17–37, 43–63, 71–91, 98–118, 143–163, 225–245, 258–275, and 286–306; these read IVSI…IVGL, KGMI…WIYS, LYES…VPKI, LSAI…SGLL, MVLS…LLVI, VISL…VWAN, ETWA…LHTR, and AIVA…VNLL.

Belongs to the CcmF/CycK/Ccl1/NrfE/CcsA family. May interact with Ccs1.

The protein localises to the plastid. Its subcellular location is the chloroplast thylakoid membrane. In terms of biological role, required during biogenesis of c-type cytochromes (cytochrome c6 and cytochrome f) at the step of heme attachment. The protein is Cytochrome c biogenesis protein CcsA of Platanus occidentalis (Sycamore).